A 602-amino-acid polypeptide reads, in one-letter code: MDTLFRLVSLQAASEQQQQQQQSASYNSRSTTSSGSRSSSHQTNASYSYYHHSSNSGGGGGGGGGYYYGGQQPPPSQYYYLEPYQEECGNAPHHQLYMDEDFSSSSSSRHFHHGARVQQQQPPASSTPTGTAPTPPLSTSSTAAGAGHGLFEAADLSFPPDLNLDFSSPASSSGGGTASSGAVGGGGGGRWASQLLLECARSVAARDSQRVQQLMWMLNELASPYGDVEQKLASYFLQGLFARLTASGPRTLRTLAAASDRNTSFDSTRRTALRFQELSPWSSFGHVAANGAILESFLEVAAAASSETQRFHILDLSNTFCTQWPTLLEALATRSADETPHLSITTVVSAAPSAPTAAVQRVMREIGQRMEKFARLMGVPFRFRAVHHSGDLAELDLDALDLREGGATTALAVNCVNSLRGVVPGRARRRDAFAASLRRLDPRVVTVVEEEADLVASDPDASSATEEGGDTEAAFLKVFGEGLRFFSAYMDSLEESFPKTSNERLALERGAGRAIVDLVSCPASESMERRETAASWARRMRSAGFSPVAFSEDVADDVRSLLRRYREGWSMREAGTDDSAAGAGVFLAWKEQPLVWASAWRP.

Positions 12–55 are enriched in low complexity; it reads AASEQQQQQQQSASYNSRSTTSSGSRSSSHQTNASYSYYHHSSN. Disordered regions lie at residues 12 to 69, 101 to 145, and 165 to 185; these read AASE…YYYG, DFSS…TAAG, and DFSS…AVGG. The span at 56–68 shows a compositional bias: gly residues; sequence SGGGGGGGGGYYY. The span at 122-145 shows a compositional bias: low complexity; sequence PPASSTPTGTAPTPPLSTSSTAAG. Residues 173–185 are compositionally biased toward gly residues; sequence SGGGTASSGAVGG. The 419-residue stretch at 183–601 folds into the GRAS domain; sequence VGGGGGGRWA…QPLVWASAWR (419 aa). The interval 190 to 253 is leucine repeat I (LRI); it reads RWASQLLLEC…LTASGPRTLR (64 aa). The tract at residues 272–349 is VHIID; the sequence is ALRFQELSPW…PHLSITTVVS (78 aa). Positions 311-315 match the VHIID motif; sequence FHILD. The segment at 365-401 is leucine repeat II (LRII); sequence EIGQRMEKFARLMGVPFRFRAVHHSGDLAELDLDALD. Residues 411-517 form a PFYRE region; sequence LAVNCVNSLR…ERGAGRAIVD (107 aa). Residues 520–601 form an SAW region; the sequence is SCPASESMER…QPLVWASAWR (82 aa).

This sequence belongs to the GRAS family. In terms of assembly, interacts with SCR1. Interacts with SMOS1. In terms of tissue distribution, expressed in leaves and roots. Detected in the stele, the endodermis and part of the cortex.

Its subcellular location is the nucleus. In terms of biological role, transcription factor required for the asymmetric cell division involved in radial pattern formation in roots. Essential for both cell division and cell specification. In Oryza sativa subsp. japonica (Rice), this protein is Protein SHORT-ROOT 1.